The primary structure comprises 1077 residues: TSC22 domain family protein 1 (1077 aa).

A required for interaction with TGFBR1 and promotion of TGF-beta signaling region spans residues 1–98 (MHQPPESTAA…SQAQLQGQPL (98 aa)). Disordered regions lie at residues 22 to 112 (MAHP…SGFQ), 125 to 283 (ISSN…VPSS), 458 to 492 (QTPT…SVGS), 842 to 874 (SSAA…GSLV), and 909 to 947 (QAIG…SDGS). A compositionally biased stretch (pro residues) spans 58-70 (FPPPSLLQPPPPA). The span at 84-96 (SLNLLSQAQLQGQ) shows a compositional bias: low complexity. Positions 133–142 (EDTESYDDLD) are enriched in acidic residues. Over residues 216-240 (HPHHLHHHHHPHHGHHLHHGHHHSS) the composition is skewed to basic residues. S263 bears the Phosphoserine mark. Residues 471 to 489 (TSGSSVSSSVSTLSHYTES) are compositionally biased toward low complexity. Polar residues predominate over residues 852–874 (VPTNLVPPQNIAQPPATQNGSLV). Residues 933 to 947 (MSGDSGGMSAVSDGS) are compositionally biased toward low complexity. Residues 1010-1031 (LKEQIKELIEKNSQLEQENNLL) are leucine-zipper. The disordered stretch occupies residues 1042-1077 (QFQAQLQTGSPPATTQPQGTTQPPAQPASQGSGSTA). Low complexity predominate over residues 1048–1077 (QTGSPPATTQPQGTTQPPAQPASQGSGSTA).

This sequence belongs to the TSC-22/Dip/Bun family. As to quaternary structure, forms homodimers. Forms heterodimers. Component of a complex composed of TSC22D1 (via N-terminus), TGFBR1 and TGFBR2; the interaction between TSC22D1 and TGFBR1 is inhibited by SMAD7 and promoted by TGFB1. Interacts with SMAD7; the interaction requires TGF-beta and the interaction is inhibited by TGFBR1. Interacts with TPT1/fortilin; interaction results in the destabilization of TSC22D1 protein and prevents TSC22D1-mediated apoptosis. Interacts with SMAD4 (via N-terminus). Interacts with ACVRL1/ALK1, ACVR1/ALK2, BMPR1A/ALK3, ACVR1B/ALK4, BMPR1B/ALK6, ACVR2A/ACTRII, and BMPR2. Interacts with SMAD6. Interacts with TFE3; the interaction is enhanced in the presence of TGF-beta. In terms of assembly, forms a heterodimer with TSC22D4/THG1. Forms a heterodimer with TSC22D4/THG1. Interacts with histone H1-2. Interacts with GNL3. Expressed in bone marrow cells (at protein level). Expressed in T-cells. Expressed in the brain. As to expression, expressed in the myoepithelial cells of the mammary gland ducts and alveoli, expression is consistent throughout pregnancy, lactation and involution (at protein level). Expressed in the cortex, medulla and papilla of the kidney. In terms of tissue distribution, expressed in the myoepithelial cells of the mammary gland, expression significantly increases in the secretory luminal epithelium of the mammary gland at the initiation of involution, with levels decreasing from day 3 of involution onwards (at protein level). Expressed in the cortex, medulla and papilla of the kidney.

The protein localises to the cytoplasm. The protein resides in the nucleus. It localises to the cell membrane. Its subcellular location is the mitochondrion. Its function is as follows. Transcriptional repressor. Acts on the C-type natriuretic peptide (CNP) promoter. Acts to promote CASP3-mediated apoptosis. Positively regulates TGF-beta signaling by interacting with SMAD7 which inhibits binding of SMAD7 to TGFBR1, preventing recruitment of SMURF ubiquitin ligases to TGFBR1 and inhibiting SMURF-mediated ubiquitination and degradation of TGFBR1. Contributes to enhancement of TGF-beta signaling by binding to and modulating the transcription activator activity of SMAD4. Promotes TGF-beta-induced transcription of COL1A2; via its interaction with TFE3 at E-boxes in the gene proximal promoter. Plays a role in the repression of hematopoietic precursor cell growth. Promotes IL2 deprivation-induced apoptosis in T-lymphocytes, via repression of TSC22D3/GILZ transcription and activation of the caspase cascade. Functionally, may act to negatively regulate TGFB3 signaling and thereby inhibit cell death in mammary gland cells. Positively regulates cell death in response to TGFB3 during mammary gland involution. The chain is TSC22 domain family protein 1 from Mus musculus (Mouse).